The primary structure comprises 306 residues: Oxygen-dependent coproporphyrinogen-III oxidase (306 aa).

S93 provides a ligand contact to substrate. A divalent metal cation is bound by residues H97 and H107. The Proton donor role is filled by H107. 109–111 (NVR) is a binding site for substrate. A divalent metal cation-binding residues include H146 and H176. The interval 241 to 276 (YVEYNLVYDRGTLFGLQSGGRTESILMSLPPQVAWG) is important for dimerization. 259 to 261 (GGR) lines the substrate pocket.

Belongs to the aerobic coproporphyrinogen-III oxidase family. Homodimer. It depends on a divalent metal cation as a cofactor.

The protein resides in the cytoplasm. The catalysed reaction is coproporphyrinogen III + O2 + 2 H(+) = protoporphyrinogen IX + 2 CO2 + 2 H2O. It functions in the pathway porphyrin-containing compound metabolism; protoporphyrin-IX biosynthesis; protoporphyrinogen-IX from coproporphyrinogen-III (O2 route): step 1/1. Its function is as follows. Involved in the heme biosynthesis. Catalyzes the aerobic oxidative decarboxylation of propionate groups of rings A and B of coproporphyrinogen-III to yield the vinyl groups in protoporphyrinogen-IX. The chain is Oxygen-dependent coproporphyrinogen-III oxidase from Stutzerimonas stutzeri (strain A1501) (Pseudomonas stutzeri).